A 70-amino-acid chain; its full sequence is Cold shock-like protein CspH (70 aa).

The CSD domain occupies 7-67 (GIVKTFDCKS…GLRGPTAANV (61 aa)).

The protein localises to the cytoplasm. This Salmonella typhi protein is Cold shock-like protein CspH (cspH).